Here is a 129-residue protein sequence, read N- to C-terminus: Fluoride-specific ion channel FluC (129 aa).

4 helical membrane passes run 6–26 (ILAI…FNGI), 35–55 (IPFG…ILIA), 73–93 (TGVL…FLLL), and 98–118 (IALA…MAGG). Positions 77 and 80 each coordinate Na(+).

Belongs to the fluoride channel Fluc/FEX (TC 1.A.43) family.

It localises to the cell inner membrane. It carries out the reaction fluoride(in) = fluoride(out). Na(+) is not transported, but it plays an essential structural role and its presence is essential for fluoride channel function. Its function is as follows. Fluoride-specific ion channel. Important for reducing fluoride concentration in the cell, thus reducing its toxicity. This Sulfurimonas denitrificans (strain ATCC 33889 / DSM 1251) (Thiomicrospira denitrificans (strain ATCC 33889 / DSM 1251)) protein is Fluoride-specific ion channel FluC.